Reading from the N-terminus, the 126-residue chain is Small ribosomal subunit protein uS12m (126 aa).

Disordered regions lie at residues 1–27 (MPTM…LNKC) and 106–126 (GIPG…KDYI). Basic residues-rich tracts occupy residues 12-23 (RESKRRTKRTRA) and 109-120 (GRRRGRSKYGTK).

It belongs to the universal ribosomal protein uS12 family.

Its subcellular location is the mitochondrion. Functionally, protein S12 is involved in the translation initiation step. The sequence is that of Small ribosomal subunit protein uS12m (RPS12) from Marchantia polymorpha (Common liverwort).